Consider the following 149-residue polypeptide: Large ribosomal subunit protein uL15 (149 aa).

Positions 1–54 are disordered; that stretch reads MSLKLHNLKPTPNSRPEKHRKGRGHAAGKGKQAGKGQSGQNKRKGHRLGFEGGQ. The span at 17 to 28 shows a compositional bias: basic residues; it reads EKHRKGRGHAAG.

This sequence belongs to the universal ribosomal protein uL15 family. In terms of assembly, part of the 50S ribosomal subunit.

Its function is as follows. Binds to the 23S rRNA. This is Large ribosomal subunit protein uL15 from Mycoplasmopsis synoviae (strain 53) (Mycoplasma synoviae).